A 429-amino-acid polypeptide reads, in one-letter code: C4-dicarboxylate transport protein (429 aa).

A run of 8 helical transmembrane segments spans residues 9–29 (VLYV…HYYP), 45–65 (LIKM…IAGM), 79–99 (LLYF…ATHI), 149–169 (GEIL…AHLG), 185–205 (VLFG…FGAM), 223–243 (LIGT…GAIA), 308–328 (IYMT…LTWM), and 356–376 (AATL…ILGI).

This sequence belongs to the dicarboxylate/amino acid:cation symporter (DAACS) (TC 2.A.23) family.

Its subcellular location is the cell inner membrane. Functionally, responsible for the transport of dicarboxylates such as succinate, fumarate, and malate from the periplasm across the membrane. The chain is C4-dicarboxylate transport protein from Burkholderia multivorans (strain ATCC 17616 / 249).